An 85-amino-acid polypeptide reads, in one-letter code: MAHKKGLGSTKNGRDSQAKRLGVKRYEGQVVRAGNILVRQRGTRFKPGKNVGMGRDFTLFALVDGVVEFQDRGRLGRYVHVRPLA.

The segment at 1–21 (MAHKKGLGSTKNGRDSQAKRL) is disordered.

The protein belongs to the bacterial ribosomal protein bL27 family.

The protein is Large ribosomal subunit protein bL27 of Thermus thermophilus (strain ATCC BAA-163 / DSM 7039 / HB27).